The primary structure comprises 370 residues: Phosphoserine aminotransferase (370 aa).

Arg-38 lines the L-glutamate pocket. Pyridoxal 5'-phosphate-binding residues include Trp-101, Thr-143, Asp-166, and Gln-189. An N6-(pyridoxal phosphate)lysine modification is found at Lys-190. 243–244 (NT) serves as a coordination point for pyridoxal 5'-phosphate.

Belongs to the class-V pyridoxal-phosphate-dependent aminotransferase family. SerC subfamily. Homodimer. Requires pyridoxal 5'-phosphate as cofactor.

It is found in the cytoplasm. It carries out the reaction O-phospho-L-serine + 2-oxoglutarate = 3-phosphooxypyruvate + L-glutamate. It catalyses the reaction 4-(phosphooxy)-L-threonine + 2-oxoglutarate = (R)-3-hydroxy-2-oxo-4-phosphooxybutanoate + L-glutamate. It participates in amino-acid biosynthesis; L-serine biosynthesis; L-serine from 3-phospho-D-glycerate: step 2/3. It functions in the pathway cofactor biosynthesis; pyridoxine 5'-phosphate biosynthesis; pyridoxine 5'-phosphate from D-erythrose 4-phosphate: step 3/5. Functionally, catalyzes the reversible conversion of 3-phosphohydroxypyruvate to phosphoserine and of 3-hydroxy-2-oxo-4-phosphonooxybutanoate to phosphohydroxythreonine. The polypeptide is Phosphoserine aminotransferase (Methanosarcina mazei (strain ATCC BAA-159 / DSM 3647 / Goe1 / Go1 / JCM 11833 / OCM 88) (Methanosarcina frisia)).